The following is a 628-amino-acid chain: Otolith matrix protein OMM-64 (628 aa).

A signal peptide spans 1-20 (MLSRLLIVPLIFALAGLAIS). Residues 43–628 (KGDKDGGGLT…AAATALAAQS (586 aa)) are disordered. Low complexity predominate over residues 78 to 93 (DSSPDTTDTPDASSSD). Residues 182–214 (TESPGSDSAESPGSDSAESPGSDSTESPGSDST) are compositionally biased toward polar residues. 3 stretches are compositionally biased toward basic and acidic residues: residues 246 to 266 (ETDK…ATDK), 276 to 285 (ELDGKAHAED), and 311 to 343 (RPEK…RDSA). Asn318 is a glycosylation site (N-linked (GlcNAc...) asparagine). 5 stretches are compositionally biased toward acidic residues: residues 449–462 (DSQE…EAEP), 477–489 (EPQE…DTDD), 514–536 (DKED…MDKD), 544–556 (DSVD…DAEP), and 565–578 (DEID…PDSE). The span at 613–628 (ASQAADAAATALAAQS) shows a compositional bias: low complexity.

Specifically expressed in otolith matrix-producing cells.

It localises to the secreted. It is found in the extracellular space. The protein localises to the extracellular matrix. In terms of biological role, calcium-binding component of otoliths, a calcium carbonate structure of the inner ear involved in hearing and balance sensing. Binds calcium. The protein is Otolith matrix protein OMM-64 of Oncorhynchus mykiss (Rainbow trout).